We begin with the raw amino-acid sequence, 339 residues long: 3-isopropylmalate dehydrogenase (339 aa).

Positions 87, 97, 124, and 214 each coordinate substrate. Aspartate 214, aspartate 238, and aspartate 242 together coordinate Mg(2+). 274–286 (GSAPDIAGQGIAD) is a binding site for NAD(+).

It belongs to the isocitrate and isopropylmalate dehydrogenases family. LeuB type 2 subfamily. Homodimer. Mg(2+) serves as cofactor. The cofactor is Mn(2+).

The protein localises to the cytoplasm. It catalyses the reaction (2R,3S)-3-isopropylmalate + NAD(+) = 4-methyl-2-oxopentanoate + CO2 + NADH. Its pathway is amino-acid biosynthesis; L-leucine biosynthesis; L-leucine from 3-methyl-2-oxobutanoate: step 3/4. Its function is as follows. Catalyzes the oxidation of 3-carboxy-2-hydroxy-4-methylpentanoate (3-isopropylmalate) to 3-carboxy-4-methyl-2-oxopentanoate. The product decarboxylates to 4-methyl-2 oxopentanoate. This Mycobacterium ulcerans (strain Agy99) protein is 3-isopropylmalate dehydrogenase.